A 558-amino-acid polypeptide reads, in one-letter code: Inositol-3-phosphate synthase 1 (558 aa).

NAD(+)-binding residues include Gly67, Gly68, Asn69, Asn70, Asp141, Ser177, Val178, Gln188, Arg191, Thr228, Ala229, Asn230, Thr231, Gly278, Ser279, Asp303, Ser306, Asn337, Asn338, Asp339, and Lys352. Phosphoserine is present on Ser279. Ser357 carries the phosphoserine modification. Residues Gly390, Asp391, Asp419, and Ser420 each contribute to the NAD(+) site. Residues 537-558 (ATNGCTGDANGHLQEEPPMPTT) are disordered.

This sequence belongs to the myo-inositol 1-phosphate synthase family. The cofactor is NAD(+). Phosphorylation at Ser-279 and Ser-357 may be associated with a decrease in activity. In terms of tissue distribution, highly expressed in testis, ovary, heart, placenta and pancreas. Weakly expressed in blood leukocyte, thymus, skeletal muscle and colon.

Its subcellular location is the cytoplasm. The catalysed reaction is D-glucose 6-phosphate = 1D-myo-inositol 3-phosphate. It participates in polyol metabolism; myo-inositol biosynthesis; myo-inositol from D-glucose 6-phosphate: step 1/2. Its activity is regulated as follows. Inhibited by mood-stabilizing drugs such as valproate (VPA) and lithium. Its function is as follows. Key enzyme in myo-inositol biosynthesis pathway that catalyzes the conversion of glucose 6-phosphate to 1-myo-inositol 1-phosphate in a NAD-dependent manner. Rate-limiting enzyme in the synthesis of all inositol-containing compounds. The polypeptide is Inositol-3-phosphate synthase 1 (ISYNA1) (Homo sapiens (Human)).